The chain runs to 130 residues: MKYFTIFVFVFSLCMLGHVSGAGIRIVNELKNKKTLWMRCYSKNDVLGPTVIPNGGQFTDYFFHNLFGTTRFMCTLKQGPGFSHSQSFRAFKNSGLWDWRAREDGIYLRRIYKAKFDDGADNLHKEQSWI.

The first 21 residues, Met-1–Gly-21, serve as a signal peptide directing secretion.

Belongs to the plant self-incompatibility (S1) protein family.

The protein localises to the secreted. This Arabidopsis thaliana (Mouse-ear cress) protein is S-protein homolog 32.